The primary structure comprises 423 residues: Sporulation-regulated protein 28 (423 aa).

The 315-residue stretch at 28 to 342 (KGLQLSILLL…ENYRAKVLTE (315 aa)) folds into the Septin-type G domain. Residues 38-45 (GEKGSGKS) form a G1 motif region. GTP is bound by residues 38 to 45 (GEKGSGKS), Gly124, 204 to 212 (KADGLTETE), and Arg291. The tract at residues 121–124 (LFPG) is G3 motif. Positions 203-206 (PKAD) are G4 motif. Polar residues predominate over residues 360–381 (RGSVSNVSTRRNSASRTLGNPD). The disordered stretch occupies residues 360 to 385 (RGSVSNVSTRRNSASRTLGNPDTNDE). Residues 384 to 417 (DENAYQIHKEIDEKNRIIEDYQRKIDLLEKMLAA) are a coiled coil.

The protein belongs to the TRAFAC class TrmE-Era-EngA-EngB-Septin-like GTPase superfamily. Septin GTPase family. Interacts with itself. Interacts with CDC11 and SPR3; probably to form a ring at the bud neck.

The protein resides in the membrane. The protein localises to the bud neck. In terms of biological role, septins are GTPases involved in cytokinesis that assemble into filaments and form a ring at the cleavage site. May act by recruiting MYO1 and HOF1, a protein involved in septation, to the site of cleavage. Septins are also involved in cell morphogenesis, bud site selection, chitin deposition, cell cycle regulation, cell compartmentalization and spore wall formation. The polypeptide is Sporulation-regulated protein 28 (SPR28) (Saccharomyces cerevisiae (strain ATCC 204508 / S288c) (Baker's yeast)).